Here is a 294-residue protein sequence, read N- to C-terminus: ATP phosphoribosyltransferase (294 aa).

It belongs to the ATP phosphoribosyltransferase family. Long subfamily. Requires Mg(2+) as cofactor.

It localises to the cytoplasm. The catalysed reaction is 1-(5-phospho-beta-D-ribosyl)-ATP + diphosphate = 5-phospho-alpha-D-ribose 1-diphosphate + ATP. It functions in the pathway amino-acid biosynthesis; L-histidine biosynthesis; L-histidine from 5-phospho-alpha-D-ribose 1-diphosphate: step 1/9. With respect to regulation, feedback inhibited by histidine. In terms of biological role, catalyzes the condensation of ATP and 5-phosphoribose 1-diphosphate to form N'-(5'-phosphoribosyl)-ATP (PR-ATP). Has a crucial role in the pathway because the rate of histidine biosynthesis seems to be controlled primarily by regulation of HisG enzymatic activity. The polypeptide is ATP phosphoribosyltransferase (Chlorobaculum parvum (strain DSM 263 / NCIMB 8327) (Chlorobium vibrioforme subsp. thiosulfatophilum)).